Here is a 144-residue protein sequence, read N- to C-terminus: Large ribosomal subunit protein uL16 (144 aa).

A compositionally biased stretch (basic residues) spans 1–16; the sequence is MLVPKRVKHRKVQRGH. The tract at residues 1–20 is disordered; sequence MLVPKRVKHRKVQRGHMRGE.

This sequence belongs to the universal ribosomal protein uL16 family. As to quaternary structure, part of the 50S ribosomal subunit.

Functionally, binds 23S rRNA and is also seen to make contacts with the A and possibly P site tRNAs. This is Large ribosomal subunit protein uL16 from Limosilactobacillus reuteri (strain DSM 20016) (Lactobacillus reuteri).